Consider the following 542-residue polypeptide: Putative leucine aminopeptidase 1 (542 aa).

Positions 294 and 299 each coordinate Mn(2+). Residue Lys323 is part of the active site. Mn(2+) is bound by residues Asp336, Asp396, and Glu398. Residue Arg400 is part of the active site.

This sequence belongs to the peptidase M17 family. As to quaternary structure, homohexamer (dimer of homotrimers). Mn(2+) is required as a cofactor.

It is found in the cytoplasm. The catalysed reaction is Release of an N-terminal amino acid, Xaa-|-Yaa-, in which Xaa is preferably Leu, but may be other amino acids including Pro although not Arg or Lys, and Yaa may be Pro. Amino acid amides and methyl esters are also readily hydrolyzed, but rates on arylamides are exceedingly low.. The enzyme catalyses Release of N-terminal proline from a peptide.. In terms of biological role, presumably involved in the processing and regular turnover of intracellular proteins. Catalyzes the removal of unsubstituted N-terminal amino acids from various peptides. In Oryza sativa subsp. japonica (Rice), this protein is Putative leucine aminopeptidase 1.